A 279-amino-acid chain; its full sequence is MRLDVVTIFGEYLQPLQLSLIGKAQAQGLLDVRVRDLREHTHDRHRTVDDTPYGGGAGLLMKPEPWGEALDAVLADPPEDADPRGPVLVVPSPVGEVFTQRAAVELAAEPWLVFACGRYEGIDARVVEHYRTRVRVREVSLGDYVLNGGEVAVLAITEAVARLLPGVIGNAASLTEESHAPEHDGLLEHPAYTKPASWRGLDVPAVLAGGNHAAVERWRRDEALRRTATRRPDVLARLDPERCDARDLAVLAELGWTPDGSGFRAGGDPVADSSDTNEP.

S-adenosyl-L-methionine contacts are provided by residues Gly-117 and 141–146; that span reads LGDYVL. The segment at 256–279 is disordered; the sequence is WTPDGSGFRAGGDPVADSSDTNEP.

The protein belongs to the RNA methyltransferase TrmD family. Homodimer.

It is found in the cytoplasm. It catalyses the reaction guanosine(37) in tRNA + S-adenosyl-L-methionine = N(1)-methylguanosine(37) in tRNA + S-adenosyl-L-homocysteine + H(+). Its function is as follows. Specifically methylates guanosine-37 in various tRNAs. This is tRNA (guanine-N(1)-)-methyltransferase from Kineococcus radiotolerans (strain ATCC BAA-149 / DSM 14245 / SRS30216).